The primary structure comprises 625 residues: Grainyhead-like protein 2 homolog (625 aa).

Disordered stretches follow at residues 1–24, 82–112, and 428–453; these read MSQE…PPFN, VSKA…GGEN, and EERK…SDGK. Positions 1 to 93 are transcription activation; it reads MSQESDNNKR…KASDSQEDQE (93 aa). Polar residues-rich tracts occupy residues 98–109 and 440–451; these read LGTSEAQSNLSG and QASQTQCNSSSD. Residues 244 to 482 enclose the Grh/CP2 DB domain; that stretch reads SSGTFQYTLE…DLHSQPVLFI (239 aa).

It belongs to the grh/CP2 family. Grainyhead subfamily. As to quaternary structure, homodimer, also forms heterodimers with GRHL1 or GRHL3. As to expression, expressed in keratinocytes (at protein level). Highly expressed in placenta, prostate, brain and kidney. Lower-level expression in a variety of epithelial tissues such as thymus, lung, salivary gland, mammary gland and digestive tract. Expressed in the cochlear. Expressed in corneal epithelial cells, but not in the endothelium or stroma.

Its subcellular location is the nucleus. The protein localises to the membrane. Functionally, transcription factor playing an important role in primary neurulation and in epithelial development. Binds directly to the consensus DNA sequence 5'-AACCGGTT-3' acting as an activator and repressor on distinct target genes. During embryogenesis, plays unique and cooperative roles with GRHL3 in establishing distinct zones of primary neurulation. Essential for closure 3 (rostral end of the forebrain), functions cooperatively with GRHL3 in closure 2 (forebrain/midbrain boundary) and posterior neuropore closure. Regulates epithelial morphogenesis acting as a target gene-associated transcriptional activator of apical junctional complex components. Up-regulates of CLDN3 and CLDN4, as well as of RAB25, which increases the CLDN4 protein and its localization at tight junctions. Comprises an essential component of the transcriptional machinery that establishes appropriate expression levels of CLDN4 and CDH1 in different types of epithelia. Exhibits functional redundancy with GRHL3 in epidermal morphogenetic events and epidermal wound repair. In lung, forms a regulatory loop with NKX2-1 that coordinates lung epithelial cell morphogenesis and differentiation. In keratinocytes, plays a role in telomerase activation during cellular proliferation, regulates TERT expression by binding to TERT promoter region and inhibiting DNA methylation at the 5'-CpG island, possibly by interfering with DNMT1 enzyme activity. In addition, impairs keratinocyte differentiation and epidermal function by inhibiting the expression of genes clustered at the epidermal differentiation complex (EDC) as well as GRHL1 and GRHL3 through epigenetic mechanisms. This is Grainyhead-like protein 2 homolog (GRHL2) from Homo sapiens (Human).